Here is a 375-residue protein sequence, read N- to C-terminus: Alcohol dehydrogenase 6 (375 aa).

Zn(2+) is bound by residues Cys-47, His-69, Cys-99, Cys-102, Cys-105, Cys-113, and Cys-175. NAD(+) contacts are provided by residues 200–205, Asp-224, Lys-229, 293–295, and Arg-370; these read GLGGVG and VGS.

This sequence belongs to the zinc-containing alcohol dehydrogenase family. Class-V subfamily. Dimer. Zn(2+) is required as a cofactor. In terms of tissue distribution, liver.

It is found in the cytoplasm. The catalysed reaction is a primary alcohol + NAD(+) = an aldehyde + NADH + H(+). It carries out the reaction a secondary alcohol + NAD(+) = a ketone + NADH + H(+). Its function is as follows. Alcohol dehydrogenase. Catalyzes the NAD-dependent oxidation of primary alcohols to the corresponding aldehydes. Oxidizes secondary alcohols to the corresponding ketones. The polypeptide is Alcohol dehydrogenase 6 (ADH6) (Peromyscus maniculatus (North American deer mouse)).